Consider the following 458-residue polypeptide: V-type ATP synthase beta chain (458 aa).

The protein belongs to the ATPase alpha/beta chains family.

Functionally, produces ATP from ADP in the presence of a proton gradient across the membrane. The V-type beta chain is a regulatory subunit. The sequence is that of V-type ATP synthase beta chain from Fusobacterium nucleatum subsp. nucleatum (strain ATCC 25586 / DSM 15643 / BCRC 10681 / CIP 101130 / JCM 8532 / KCTC 2640 / LMG 13131 / VPI 4355).